The chain runs to 146 residues: Small ribosomal subunit protein eS19 (146 aa).

This sequence belongs to the eukaryotic ribosomal protein eS19 family.

This is Small ribosomal subunit protein eS19 (RPS19A) from Oryza sativa subsp. japonica (Rice).